The sequence spans 299 residues: Protein translocase subunit SecF (299 aa).

6 helical membrane passes run 14–34, 142–162, 166–186, 193–213, 245–265, and 270–290; these read VLIVSAVLILVGLIYTFFYHG, IFLVLGTFILILIYITLRFKL, IASILSIFHDIFFIVAFLGVF, YIIVAILTIIGYSLNDTIIIF, LTSVTTFVAVFSIYVFTEGSI, and LVFMVGVIVGTYSSVFIASPI.

Belongs to the SecD/SecF family. SecF subfamily. Forms a complex with SecD. Part of the essential Sec protein translocation apparatus which comprises SecA, SecYEG and auxiliary proteins SecDF. Other proteins may also be involved.

It is found in the cell inner membrane. Part of the Sec protein translocase complex. Interacts with the SecYEG preprotein conducting channel. SecDF uses the proton motive force (PMF) to complete protein translocation after the ATP-dependent function of SecA. The chain is Protein translocase subunit SecF from Borreliella burgdorferi (strain ATCC 35210 / DSM 4680 / CIP 102532 / B31) (Borrelia burgdorferi).